A 799-amino-acid polypeptide reads, in one-letter code: Homeobox protein engrailed (799 aa).

Disordered regions lie at residues Leu189 to Lys331, Gly369 to Gln444, His554 to Lys664, and Ser678 to Phe705. Residues Gln210 to Ser222 show a composition bias toward polar residues. Composition is skewed to basic and acidic residues over residues Ser228–Cys239 and Arg246–Val256. Polar residues-rich tracts occupy residues Leu284 to His299 and His377 to Asp401. The segment covering Glu416–Ser431 has biased composition (low complexity). 2 stretches are compositionally biased toward basic and acidic residues: residues Asp608–Ser619 and Val629–Asn648. The homeobox DNA-binding region spans Glu698–Val757.

Belongs to the engrailed homeobox family. In terms of tissue distribution, expressed in the dorsal ectoderm of early gastrulae in a band corresponding to the peripheral area of the presumptive shell gland. Also expressed at four points along the posterior ectoderm. In late gastrulae, it is predominantly expressed in the peripheral ectoderm of the shell gland and in spots at the posterior end behind the presumptive foot. Expressed in late trochophore larvae at four points behind the foot, at two locations at the base of the foot and in the peripheral ectoderm of the shell gland.

Its subcellular location is the nucleus. May be involved in shell and shell gland formation during development. The chain is Homeobox protein engrailed from Lymnaea stagnalis (Great pond snail).